A 1020-amino-acid chain; its full sequence is Protein SCAR3 (1020 aa).

Disordered stretches follow at residues 167-198, 351-382, and 802-827; these read NLSQ…DMSR, DEKP…LRKR, and DYLS…GRKE. The segment covering 174–191 has biased composition (basic residues); it reads KFQKDKKHCKMKKKKTSS. A compositionally biased stretch (basic and acidic residues) spans 365 to 382; sequence FHSKDNENDKSESGLRKR. Residues 802–814 are compositionally biased toward polar residues; that stretch reads DYLSDNHSLSNSE. In terms of domain architecture, WH2 spans 954–972; sequence ETGDFLQQIRTQQFNLRPV.

It belongs to the SCAR/WAVE family. As to quaternary structure, binds BRK1. Interacts with SPK1, ABI1, ABI2, ABI3 and ABI4. As to expression, expressed in expanding cotyledons, expanding leaves and expanding siliques containing developing embryos. Detected in unopened flower buds. Reduced expression in mature leaves and mature cotyledons.

The protein resides in the cytoplasm. It localises to the cytoskeleton. Involved in regulation of actin and microtubule organization. Part of a WAVE complex that activates the Arp2/3 complex. Regulates trichome branch positioning and expansion. The chain is Protein SCAR3 (SCAR3) from Arabidopsis thaliana (Mouse-ear cress).